The following is a 228-amino-acid chain: FAS1 domain-containing protein NCU02579 (228 aa).

Residues 1–18 form the signal peptide; that stretch reads MRFTPYLVLAPTAAVAFA. A disordered region spans residues 50 to 74; sequence PAVGLGPAMPPSGAPQADGPANAGG. In terms of domain architecture, FAS1 spans 77–225; sequence SVMLSDVMGR…GEVWILKGVR (149 aa).

The protein resides in the vacuole. This is FAS1 domain-containing protein NCU02579 from Neurospora crassa (strain ATCC 24698 / 74-OR23-1A / CBS 708.71 / DSM 1257 / FGSC 987).